The following is a 329-amino-acid chain: Phosphate acyltransferase (329 aa).

The protein belongs to the PlsX family. In terms of assembly, homodimer. Probably interacts with PlsY.

It localises to the cytoplasm. It catalyses the reaction a fatty acyl-[ACP] + phosphate = an acyl phosphate + holo-[ACP]. Its pathway is lipid metabolism; phospholipid metabolism. Catalyzes the reversible formation of acyl-phosphate (acyl-PO(4)) from acyl-[acyl-carrier-protein] (acyl-ACP). This enzyme utilizes acyl-ACP as fatty acyl donor, but not acyl-CoA. This Geobacillus sp. (strain WCH70) protein is Phosphate acyltransferase.